Here is a 138-residue protein sequence, read N- to C-terminus: ATP synthase epsilon chain (138 aa).

Belongs to the ATPase epsilon chain family. F-type ATPases have 2 components, CF(1) - the catalytic core - and CF(0) - the membrane proton channel. CF(1) has five subunits: alpha(3), beta(3), gamma(1), delta(1), epsilon(1). CF(0) has three main subunits: a, b and c.

The protein resides in the cell inner membrane. Its function is as follows. Produces ATP from ADP in the presence of a proton gradient across the membrane. This chain is ATP synthase epsilon chain, found in Acidovorax ebreus (strain TPSY) (Diaphorobacter sp. (strain TPSY)).